The chain runs to 394 residues: Elongation factor Tu (394 aa).

Residues 10-204 (RTHINVGTIG…ILDNYIPEPK (195 aa)) form the tr-type G domain. The interval 19-26 (GHVDHGKT) is G1. Position 19–26 (19–26 (GHVDHGKT)) interacts with GTP. A Mg(2+)-binding site is contributed by Thr26. Residues 60–64 (GITIN) are G2. The tract at residues 81–84 (DCPG) is G3. Residues 81 to 85 (DCPGH) and 136 to 139 (NKCD) contribute to the GTP site. Residues 136–139 (NKCD) are G4. Positions 174-176 (SAL) are G5.

The protein belongs to the TRAFAC class translation factor GTPase superfamily. Classic translation factor GTPase family. EF-Tu/EF-1A subfamily. As to quaternary structure, monomer.

It localises to the cytoplasm. The catalysed reaction is GTP + H2O = GDP + phosphate + H(+). Its function is as follows. GTP hydrolase that promotes the GTP-dependent binding of aminoacyl-tRNA to the A-site of ribosomes during protein biosynthesis. The sequence is that of Elongation factor Tu from Blochmanniella floridana.